Consider the following 194-residue polypeptide: Small ribosomal subunit protein eS7 (194 aa).

This sequence belongs to the eukaryotic ribosomal protein eS7 family.

In Drosophila yakuba (Fruit fly), this protein is Small ribosomal subunit protein eS7 (RpS7).